The primary structure comprises 255 residues: MSFKRPCPLARYNRTSYFYPTTFSESSEHSHLLVSPVLVASAVIGVVITLSCITIIVGSIRRDRQARIQRHHHRHRRHHHHHRHRRRRHREYASGGHTHSRSSPRMPYACSPAEDWPPPLDVSSEGDVDVTVLWELYPDSPPGYEECMGPGATQLYVPTDAPPPYSMTDSCPRLNGALDSDSGQSRSHRQQEQRTQGQSRLHTVSMDTLPPYEAVCGTGSPSDLLPLPGPEPWPSNSQGSPIPTQAPMPSPERIV.

A helical membrane pass occupies residues 37–57 (VLVASAVIGVVITLSCITIIV). Positions 69–90 (QRHHHRHRRHHHHHRHRRRRHR) are enriched in basic residues. Disordered stretches follow at residues 69 to 109 (QRHH…MPYA) and 160 to 255 (DAPP…ERIV). Polar residues predominate over residues 193–206 (QRTQGQSRLHTVSM). Positions 217–226 (GTGSPSDLLP) are enriched in low complexity. Residues 234-243 (PSNSQGSPIP) are compositionally biased toward polar residues. Positions 244–255 (TQAPMPSPERIV) are enriched in pro residues.

Interacts with NEDD4.

It localises to the membrane. This chain is Protein BEAN1 (Bean1), found in Mus musculus (Mouse).